Reading from the N-terminus, the 215-residue chain is 3-demethoxyubiquinol 3-hydroxylase (215 aa).

The Fe cation site is built by Glu-64, Glu-94, His-97, Glu-146, Glu-178, and His-181.

It belongs to the COQ7 family. Requires Fe cation as cofactor.

The protein localises to the cell membrane. The catalysed reaction is a 5-methoxy-2-methyl-3-(all-trans-polyprenyl)benzene-1,4-diol + AH2 + O2 = a 3-demethylubiquinol + A + H2O. The protein operates within cofactor biosynthesis; ubiquinone biosynthesis. Functionally, catalyzes the hydroxylation of 2-nonaprenyl-3-methyl-6-methoxy-1,4-benzoquinol during ubiquinone biosynthesis. This chain is 3-demethoxyubiquinol 3-hydroxylase, found in Coxiella burnetii (strain CbuG_Q212) (Coxiella burnetii (strain Q212)).